We begin with the raw amino-acid sequence, 100 residues long: Large ribosomal subunit protein bL21 (100 aa).

Belongs to the bacterial ribosomal protein bL21 family. In terms of assembly, part of the 50S ribosomal subunit. Contacts protein L20.

This protein binds to 23S rRNA in the presence of protein L20. The protein is Large ribosomal subunit protein bL21 of Mycoplasma pneumoniae (strain ATCC 29342 / M129 / Subtype 1) (Mycoplasmoides pneumoniae).